Consider the following 401-residue polypeptide: MLRWITAGESHGRALVAVVEGMVAGVHVTSADIADQLARRRLGYGRGARMTFERDAVTVLSGIRHGSTLGGPIAIEIGNTEWPKWETVMAADPVDPAELADVARNAPLTRPRPGHADYAGMLKYGFDDARPVLERASARETAARVAAGTVARAFLRQALGVEVLSHVISIGASAPYEGPPPRAEDLPAIDASPVRAYDKAAEADMIAQIEAAKKDGDTLGGVVEAVALGLPVGLGSFTSGDHRLDSQLAAAVMGIQAIKGVEIGDGFQTARRRGSRAHDEMYPGPDGVVRSTNRAGGLEGGMTNGQPLRVRAAMKPISTVPRALATVDLATGDEAVAIHQRSDVCAVPAAGVVVETMVALVLARAALEKFGGDSLAETQRNIAAYQRSVADREAPAARVSG.

NADP(+)-binding residues include R40 and R46. Residues 135 to 137 (RAS), 256 to 257 (QA), G300, 315 to 319 (KPIST), and R341 contribute to the FMN site.

Belongs to the chorismate synthase family. Homotetramer. FMNH2 is required as a cofactor.

The enzyme catalyses 5-O-(1-carboxyvinyl)-3-phosphoshikimate = chorismate + phosphate. The protein operates within metabolic intermediate biosynthesis; chorismate biosynthesis; chorismate from D-erythrose 4-phosphate and phosphoenolpyruvate: step 7/7. Catalyzes the anti-1,4-elimination of the C-3 phosphate and the C-6 proR hydrogen from 5-enolpyruvylshikimate-3-phosphate (EPSP) to yield chorismate, which is the branch point compound that serves as the starting substrate for the three terminal pathways of aromatic amino acid biosynthesis. This reaction introduces a second double bond into the aromatic ring system. This chain is Chorismate synthase, found in Mycobacterium bovis (strain BCG / Pasteur 1173P2).